A 197-amino-acid polypeptide reads, in one-letter code: Protein GrpE (197 aa).

The interval 1-39 is disordered; that stretch reads MSSKEQKTPEGQAPEEIIMDQHEEIEAVEPEASAEQVDP.

The protein belongs to the GrpE family. Homodimer.

The protein resides in the cytoplasm. Functionally, participates actively in the response to hyperosmotic and heat shock by preventing the aggregation of stress-denatured proteins, in association with DnaK and GrpE. It is the nucleotide exchange factor for DnaK and may function as a thermosensor. Unfolded proteins bind initially to DnaJ; upon interaction with the DnaJ-bound protein, DnaK hydrolyzes its bound ATP, resulting in the formation of a stable complex. GrpE releases ADP from DnaK; ATP binding to DnaK triggers the release of the substrate protein, thus completing the reaction cycle. Several rounds of ATP-dependent interactions between DnaJ, DnaK and GrpE are required for fully efficient folding. This Escherichia coli O157:H7 (strain EC4115 / EHEC) protein is Protein GrpE.